Reading from the N-terminus, the 623-residue chain is V-type proton ATPase catalytic subunit A (623 aa).

An ATP-binding site is contributed by 252 to 259 (GAFGCGKT).

This sequence belongs to the ATPase alpha/beta chains family. In terms of assembly, V-ATPase is a heteromultimeric enzyme composed of a peripheral catalytic V1 complex (main components: subunits A, B, C, D, E, and F) attached to an integral membrane V0 proton pore complex (main component: the proteolipid protein).

The enzyme catalyses ATP + H2O + 4 H(+)(in) = ADP + phosphate + 5 H(+)(out). Catalytic subunit of the peripheral V1 complex of vacuolar ATPase. V-ATPase vacuolar ATPase is responsible for acidifying a variety of intracellular compartments in eukaryotic cells. The polypeptide is V-type proton ATPase catalytic subunit A (Beta vulgaris (Sugar beet)).